A 318-amino-acid polypeptide reads, in one-letter code: Elongation factor Ts, mitochondrial (318 aa).

The transit peptide at 1 to 18 directs the protein to the mitochondrion; it reads MLLQRFFTRALHSTRQLY.

Belongs to the EF-Ts family.

Its subcellular location is the mitochondrion. In terms of biological role, associates with the EF-Tu.GDP complex and induces the exchange of GDP to GTP. It remains bound to the aminoacyl-tRNA.EF-Tu.GTP complex up to the GTP hydrolysis stage on the ribosome. The protein is Elongation factor Ts, mitochondrial of Drosophila melanogaster (Fruit fly).